Reading from the N-terminus, the 247-residue chain is Coproheme decarboxylase (247 aa).

Fe-coproporphyrin III is bound by residues Arg129, 143 to 147, His170, Gln183, and Ser221; that span reads YPMDK. Tyr143 is an active-site residue.

Belongs to the ChdC family. Type 1 subfamily. Fe-coproporphyrin III is required as a cofactor.

It catalyses the reaction Fe-coproporphyrin III + 2 H2O2 + 2 H(+) = heme b + 2 CO2 + 4 H2O. It carries out the reaction Fe-coproporphyrin III + H2O2 + H(+) = harderoheme III + CO2 + 2 H2O. The enzyme catalyses harderoheme III + H2O2 + H(+) = heme b + CO2 + 2 H2O. Its pathway is porphyrin-containing compound metabolism; protoheme biosynthesis. Functionally, involved in coproporphyrin-dependent heme b biosynthesis. Catalyzes the decarboxylation of Fe-coproporphyrin III (coproheme) to heme b (protoheme IX), the last step of the pathway. The reaction occurs in a stepwise manner with a three-propionate intermediate. This is Coproheme decarboxylase from Bacillus cereus (strain B4264).